Here is a 156-residue protein sequence, read N- to C-terminus: Small ribosomal subunit protein uS7 (156 aa).

This sequence belongs to the universal ribosomal protein uS7 family. In terms of assembly, part of the 30S ribosomal subunit. Contacts proteins S9 and S11.

In terms of biological role, one of the primary rRNA binding proteins, it binds directly to 16S rRNA where it nucleates assembly of the head domain of the 30S subunit. Is located at the subunit interface close to the decoding center, probably blocks exit of the E-site tRNA. The polypeptide is Small ribosomal subunit protein uS7 (Bacillus cereus (strain B4264)).